A 96-amino-acid polypeptide reads, in one-letter code: Integration host factor subunit beta (96 aa).

Belongs to the bacterial histone-like protein family. Heterodimer of an alpha and a beta chain.

Its function is as follows. This protein is one of the two subunits of integration host factor, a specific DNA-binding protein that functions in genetic recombination as well as in transcriptional and translational control. In Caulobacter vibrioides (strain ATCC 19089 / CIP 103742 / CB 15) (Caulobacter crescentus), this protein is Integration host factor subunit beta.